A 378-amino-acid chain; its full sequence is Putative glutamate--cysteine ligase 2 (378 aa).

Belongs to the glutamate--cysteine ligase type 2 family. YbdK subfamily.

The catalysed reaction is L-cysteine + L-glutamate + ATP = gamma-L-glutamyl-L-cysteine + ADP + phosphate + H(+). In terms of biological role, ATP-dependent carboxylate-amine ligase which exhibits weak glutamate--cysteine ligase activity. The polypeptide is Putative glutamate--cysteine ligase 2 (Ectopseudomonas mendocina (strain ymp) (Pseudomonas mendocina)).